The chain runs to 96 residues: Conantokin-E (96 aa).

The first 24 residues, 1–24 (LLVPLVTFHLILGMGTLDHGGALT), serve as a signal peptide directing secretion. Positions 25-72 (ERRSADATALKPEPVLLQKSDARSTDDNDKDRLTQMKRILKKRGNKAR) are excised as a propeptide. The disordered stretch occupies residues 28–57 (SADATALKPEPVLLQKSDARSTDDNDKDRL). A compositionally biased stretch (basic and acidic residues) spans 44–57 (SDARSTDDNDKDRL). 4-carboxyglutamate is present on residues E75, E76, E82, E86, and E95. The a divalent metal cation site is built by E82 and E86. C83 and C96 are disulfide-bonded.

This sequence belongs to the conotoxin B superfamily. Expressed by the venom duct.

It localises to the secreted. Functionally, conantokins inhibit N-methyl-D-aspartate (NMDA) receptors. This toxin has the highest potency for the NR2B/GRIN2B subunit, followed by NR2A/GRIN2A, NR2C/GRIN2C, and NR2D/GRIN2D subunits. The polypeptide is Conantokin-E (Conus ermineus (Agate cone)).